The sequence spans 396 residues: Digeranylgeranylglycerophospholipid reductase 2 (396 aa).

A13, E32, C43, A44, G46, R92, A116, D278, G290, and L291 together coordinate FAD.

It belongs to the geranylgeranyl reductase family. DGGGPL reductase subfamily. It depends on FAD as a cofactor.

It catalyses the reaction a 2,3-bis-O-phytanyl-sn-glycerol 1-phospholipid + 8 A = a 2,3-bis-O-(geranylgeranyl)-sn-glycerol 1-phospholipid + 8 AH2. The enzyme catalyses 2,3-bis-O-(phytanyl)-sn-glycerol 1-phosphate + 8 A = 2,3-bis-O-(geranylgeranyl)-sn-glycerol 1-phosphate + 8 AH2. It carries out the reaction CDP-2,3-bis-O-(geranylgeranyl)-sn-glycerol + 8 AH2 = CDP-2,3-bis-O-(phytanyl)-sn-glycerol + 8 A. The catalysed reaction is archaetidylserine + 8 AH2 = 2,3-bis-O-phytanyl-sn-glycero-3-phospho-L-serine + 8 A. The protein operates within membrane lipid metabolism; glycerophospholipid metabolism. In terms of biological role, is involved in the reduction of 2,3-digeranylgeranylglycerophospholipids (unsaturated archaeols) into 2,3-diphytanylglycerophospholipids (saturated archaeols) in the biosynthesis of archaeal membrane lipids. Catalyzes the formation of archaetidic acid (2,3-di-O-phytanyl-sn-glyceryl phosphate) from 2,3-di-O-geranylgeranylglyceryl phosphate (DGGGP) via the hydrogenation of each double bond of the isoprenoid chains. Is also probably able to reduce double bonds of geranyl groups in CDP-2,3-bis-O-(geranylgeranyl)-sn-glycerol and archaetidylserine, thus acting at various stages in the biosynthesis of archaeal membrane lipids. This Methanopyrus kandleri (strain AV19 / DSM 6324 / JCM 9639 / NBRC 100938) protein is Digeranylgeranylglycerophospholipid reductase 2.